Consider the following 189-residue polypeptide: Molybdenum cofactor guanylyltransferase (189 aa).

GTP is bound by residues 12–14 (LAG), K24, D68, and D94. D94 serves as a coordination point for Mg(2+).

Belongs to the MobA family. In terms of assembly, monomer. It depends on Mg(2+) as a cofactor.

The protein resides in the cytoplasm. It catalyses the reaction Mo-molybdopterin + GTP + H(+) = Mo-molybdopterin guanine dinucleotide + diphosphate. Transfers a GMP moiety from GTP to Mo-molybdopterin (Mo-MPT) cofactor (Moco or molybdenum cofactor) to form Mo-molybdopterin guanine dinucleotide (Mo-MGD) cofactor. This is Molybdenum cofactor guanylyltransferase from Xanthomonas euvesicatoria pv. vesicatoria (strain 85-10) (Xanthomonas campestris pv. vesicatoria).